The chain runs to 149 residues: Deoxyuridine 5'-triphosphate nucleotidohydrolase (149 aa).

Substrate is bound by residues 68–70, Asn-81, 85–87, and Lys-95; these read RSG and TVD.

Belongs to the dUTPase family. Mg(2+) is required as a cofactor.

It catalyses the reaction dUTP + H2O = dUMP + diphosphate + H(+). It participates in pyrimidine metabolism; dUMP biosynthesis; dUMP from dCTP (dUTP route): step 2/2. This enzyme is involved in nucleotide metabolism: it produces dUMP, the immediate precursor of thymidine nucleotides and it decreases the intracellular concentration of dUTP so that uracil cannot be incorporated into DNA. The polypeptide is Deoxyuridine 5'-triphosphate nucleotidohydrolase (Neorickettsia sennetsu (strain ATCC VR-367 / Miyayama) (Ehrlichia sennetsu)).